We begin with the raw amino-acid sequence, 460 residues long: MRVYIFLCLMCWVRSDNKRPCLEFSQLSVKDSFRDLFIPRIETILMMYTRNNLNCAEPLFEQNNSLNVNFNTQKKTVWLIHGYRPVGSIPLWLQNFVRILLNEEDMNVIVVDWSRGATTFIYNRAVKNTRKVAVSLSVHIKNLLKHGASLDNFHFIGVSLGAHISGFVGKIFHGQLGRITGLDPAGPRFSRKPPYSRLDYTDAKFVDVIHSDSNGLGIQEPLGHIDFYPNGGNKQPGCPKSIFSGIQFIKCNHQRAVHLFMASLETNCNFISFPCRSYKDYKTSLCVDCDCFKEKSCPRLGYQAKLFKGVLKERMEGRPLRTTVFLDTSGTYPFCTYYFVLSIIVPDKTMMDGSFSFKLLNQLGMIEEPRLYEKNKPFYKLQEVKILAQFYNDFVNISSIGLTYFQSSNLQCSTCTYKIQSLMLKSLTYPERPPLCRYNIVLKDREEVFLNPNTCTPKNT.

Positions 1 to 15 are cleaved as a signal peptide; it reads MRVYIFLCLMCWVRS. Asparagine 63 carries N-linked (GlcNAc...) asparagine glycosylation. The Nucleophile role is filled by serine 159. Aspartate 183 serves as the catalytic Charge relay system. Residues cysteine 238 and cysteine 251 are joined by a disulfide bond. Residue histidine 253 is the Charge relay system of the active site. Disulfide bonds link cysteine 275-cysteine 286 and cysteine 289-cysteine 297. N-linked (GlcNAc...) asparagine glycosylation is present at asparagine 396. Cysteine 436 and cysteine 455 form a disulfide bridge.

Belongs to the AB hydrolase superfamily. Lipase family. As to quaternary structure, interacts with heparin with a high affinity. In terms of tissue distribution, expressed in testis. Expressed exclusively at the connecting piece of the sperm.

Its subcellular location is the cell membrane. It is found in the secreted. The enzyme catalyses 1-hexadecanoyl-2-(9Z-octadecenoyl)-sn-glycero-3-phosphate + H2O = 2-(9Z-octadecenoyl)-sn-glycero-3-phosphate + hexadecanoate + H(+). Its activity is regulated as follows. Inhibited by sodium vanadate. In terms of biological role, hydrolyzes specifically phosphatidic acid (PA) to produce 2-acyl lysophosphatidic acid (LPA; a potent bioactive lipid mediator) and fatty acid. Does not hydrolyze other phospholipids, like phosphatidylserine (PS), phosphatidylcholine (PC) and phosphatidylethanolamine (PE) or triacylglycerol (TG). The chain is Lipase member I (LIPI) from Homo sapiens (Human).